Here is an 82-residue protein sequence, read N- to C-terminus: Large ribosomal subunit protein uL23 (82 aa).

The protein belongs to the universal ribosomal protein uL23 family. As to quaternary structure, part of the 50S ribosomal subunit. Contacts protein L29.

Its function is as follows. Binds to 23S rRNA. One of the proteins that surrounds the polypeptide exit tunnel on the outside of the ribosome. This Methanosarcina barkeri (strain Fusaro / DSM 804) protein is Large ribosomal subunit protein uL23.